A 511-amino-acid polypeptide reads, in one-letter code: Apolipoprotein N-acyltransferase (511 aa).

6 consecutive transmembrane segments (helical) span residues Pro-7–Ala-25, Gly-58–His-78, Phe-90–Trp-110, Leu-125–Phe-145, Val-163–Val-183, and Gly-192–Leu-212. Residues Ile-230–Pro-470 enclose the CN hydrolase domain. Glu-269 serves as the catalytic Proton acceptor. Residue Lys-330 is part of the active site. Cys-382 acts as the Nucleophile in catalysis. The chain crosses the membrane as a helical span at residues Leu-478–Leu-498.

It belongs to the CN hydrolase family. Apolipoprotein N-acyltransferase subfamily.

It localises to the cell inner membrane. It catalyses the reaction N-terminal S-1,2-diacyl-sn-glyceryl-L-cysteinyl-[lipoprotein] + a glycerophospholipid = N-acyl-S-1,2-diacyl-sn-glyceryl-L-cysteinyl-[lipoprotein] + a 2-acyl-sn-glycero-3-phospholipid + H(+). It participates in protein modification; lipoprotein biosynthesis (N-acyl transfer). Its function is as follows. Catalyzes the phospholipid dependent N-acylation of the N-terminal cysteine of apolipoprotein, the last step in lipoprotein maturation. This is Apolipoprotein N-acyltransferase from Pseudomonas paraeruginosa (strain DSM 24068 / PA7) (Pseudomonas aeruginosa (strain PA7)).